Here is a 192-residue protein sequence, read N- to C-terminus: Interleukin-18 (192 aa).

Residues 1–35 constitute a propeptide that is removed on maturation; that stretch reads MAAEPVEDNCISFVEMKFINNTLYFVAENGDLESD.

Belongs to the IL-1 family. As to quaternary structure, forms a ternary complex with ligand-binding receptor subunit IL18R1 and signaling receptor subunit IL18RAP at the plasma membrane. Mature IL18 first binds to IL18R1 forming a low affinity binary complex, which then interacts with IL18RAP to form a high affinity ternary complex that signals inside the cell. Interacts with cargo receptor TMED10; the interaction mediates the translocation from the cytoplasm into the ERGIC (endoplasmic reticulum-Golgi intermediate compartment) and thereby secretion. In terms of processing, the pro-IL-18 precursor is processed by CASP1, CASP4 or CASP5 to yield its mature, active form. The pro-IL-18 precursor features autoinhibitory interactions between the propeptide and the post-cleavage-site region, preventing recognition by the IL18R1 receptor. Processing by CASP1, CASP4 or CASP5 induces conformational changes to generate critical receptor-binding sites. The mature form is then secreted and released in the extracellular milieu by passing through the gasdermin-D (GSDMD) pore. In contrast, cleavage by CASP3 inactivates IL18.

The protein localises to the cytoplasm. It is found in the cytosol. The protein resides in the secreted. Pro-inflammatory cytokine primarily involved in epithelial barrier repair, polarized T-helper 1 (Th1) cell and natural killer (NK) cell immune responses. Upon binding to IL18R1 and IL18RAP, forms a signaling ternary complex which activates NF-kappa-B, triggering synthesis of inflammatory mediators. Synergizes with IL12/interleukin-12 to induce IFNG synthesis from T-helper 1 (Th1) cells and natural killer (NK) cells. Involved in transduction of inflammation downstream of pyroptosis: its mature form is specifically released in the extracellular milieu by passing through the gasdermin-D (GSDMD) pore. The sequence is that of Interleukin-18 (IL18) from Capra hircus (Goat).